The sequence spans 362 residues: Lipoprotein p35 (362 aa).

A signal peptide spans 1-30 (MKIKKIKLLKALALTGAFGIVATVPVIVSS). C31 carries N-palmitoyl cysteine lipidation. C31 is lipidated: S-diacylglycerol cysteine. Residues 33-53 (STSENNGNGNGNGGTDGNTQQ) form a disordered region.

This sequence belongs to the p35 lipoprotein family. The N-terminus is blocked.

It localises to the cell membrane. Functionally, major M.penetrans antigen. This Malacoplasma penetrans (strain HF-2) (Mycoplasma penetrans) protein is Lipoprotein p35.